The primary structure comprises 116 residues: Large ribosomal subunit protein bL20c (116 aa).

This sequence belongs to the bacterial ribosomal protein bL20 family.

Its subcellular location is the plastid. The protein localises to the chloroplast. In terms of biological role, binds directly to 23S ribosomal RNA and is necessary for the in vitro assembly process of the 50S ribosomal subunit. It is not involved in the protein synthesizing functions of that subunit. This is Large ribosomal subunit protein bL20c from Rhodomonas salina (Cryptomonas salina).